Consider the following 696-residue polypeptide: Verrucotoxin subunit beta (696 aa).

The region spanning 506–696 (HMPGVETIKD…GCTTESQWSN (191 aa)) is the B30.2/SPRY domain.

It belongs to the SNTX/VTX toxin family. In terms of assembly, tetramer composed of 2 alpha and 2 beta subunits. In terms of processing, glycosylated. Expressed by the venom gland.

The protein localises to the secreted. Functionally, this lethal (towards mice) toxin induces hemolytic, cytolytic and hypotensive activities. Inhibits calcium channels and may activate ATP-sensitive potassium channels in frog atrial heart muscle. In guinea-pig ventricular myocytes, it modulates calcium channel activity through the beta-adrenoceptor-cAMP-PKA pathway (ADRB). This chain is Verrucotoxin subunit beta, found in Synanceia verrucosa (Reef stonefish).